A 223-amino-acid polypeptide reads, in one-letter code: UPF0173 metal-dependent hydrolase Amet_4625 (223 aa).

It belongs to the UPF0173 family.

The protein is UPF0173 metal-dependent hydrolase Amet_4625 of Alkaliphilus metalliredigens (strain QYMF).